The chain runs to 229 residues: Ribosome maturation factor RimM (229 aa).

The disordered stretch occupies residues 1–21 (MAGHDSGNAKRGRSPSFGVFV). The PRC barrel domain maps to 148-229 (ADEFYWVDLI…RVVVDWEADY (82 aa)).

It belongs to the RimM family. As to quaternary structure, binds ribosomal protein uS19.

It localises to the cytoplasm. In terms of biological role, an accessory protein needed during the final step in the assembly of 30S ribosomal subunit, possibly for assembly of the head region. Essential for efficient processing of 16S rRNA. May be needed both before and after RbfA during the maturation of 16S rRNA. It has affinity for free ribosomal 30S subunits but not for 70S ribosomes. This chain is Ribosome maturation factor RimM, found in Burkholderia pseudomallei (strain 1106a).